A 149-amino-acid polypeptide reads, in one-letter code: Small ribosomal subunit protein bS6 (149 aa).

The tract at residues 93 to 149 (VGKHEEGPSAMMQKRDRDDRPRRDGDRPDRGGFGDRGPRPDRGDRDDRPRRPREDRA) is disordered. Basic and acidic residues predominate over residues 94–149 (GKHEEGPSAMMQKRDRDDRPRRDGDRPDRGGFGDRGPRPDRGDRDDRPRRPREDRA).

It belongs to the bacterial ribosomal protein bS6 family.

Binds together with bS18 to 16S ribosomal RNA. The protein is Small ribosomal subunit protein bS6 of Rhizobium meliloti (strain 1021) (Ensifer meliloti).